The primary structure comprises 226 residues: N-acetylmuramic acid 6-phosphate phosphatase (226 aa).

Catalysis depends on aspartate 12, which acts as the Nucleophile. Aspartate 12, aspartate 14, and aspartate 171 together coordinate Mg(2+). The active-site Proton donor is aspartate 14.

This sequence belongs to the HAD-like hydrolase superfamily. CbbY/CbbZ/Gph/YieH family. Phosphatase MupP subfamily. The cofactor is Mg(2+).

It catalyses the reaction N-acetyl-D-muramate 6-phosphate + H2O = N-acetyl-D-muramate + phosphate. It functions in the pathway cell wall biogenesis; peptidoglycan recycling. Its function is as follows. Specifically catalyzes the dephosphorylation of N-acetylmuramate 6-phosphate (MurNAc-6P) to MurNac. Is involved in peptidoglycan recycling as part of a cell wall recycling pathway that bypasses de novo biosynthesis of the peptidoglycan precursor UDP-MurNAc. Plays a role in intrinsic resistance to fosfomycin, which targets the de novo synthesis of UDP-MurNAc. The sequence is that of N-acetylmuramic acid 6-phosphate phosphatase from Pseudomonas aeruginosa (strain ATCC 15692 / DSM 22644 / CIP 104116 / JCM 14847 / LMG 12228 / 1C / PRS 101 / PAO1).